The primary structure comprises 356 residues: MPEFVRVAINESLWEFPDIYEFVRFLGGGSFGQVAKVRLRGTENYFAMKRLMRPFEREEDAKGTYREIRLLKHMNHRNVISLLNVFHPPAHNMMEFQQVYLVTHLMDADLHRYSRSKRMSDQEIRIILYQILRGLKYIHSAGVVHRDLKPCNIAVNGNSEVRILDFGLSRMCADKMTDHVGTMWYLAPEIIFLRGQYTKAIDVWSVGCILAELITDRVLFRGENYVSQIRCLINIMGTPTREFITGISMERSRNYLEGYPLRQRCDFHHLFMGYDVQAIDLMEKMLEMVPEKRITAAEAMLHPYLRDLIEPHHHAEDTAPVYDQNFENMVLPVKCWKELVSHEIRNFRPDQLDLHF.

The Protein kinase domain maps to 20–305 (YEFVRFLGGG…AAEAMLHPYL (286 aa)). ATP-binding positions include 26 to 34 (LGGGSFGQV) and K49. The Proton acceptor role is filled by D147. Phosphothreonine is present on T177.

Belongs to the protein kinase superfamily. CMGC Ser/Thr protein kinase family. MAP kinase subfamily. It depends on Mg(2+) as a cofactor. The phosphorylation on Thr-177 activates the enzyme. A conserved Tyr, which must also be phosphorylated to activate the enzyme in closely related sequences, is replaced by His-179 in this sequence.

The enzyme catalyses L-seryl-[protein] + ATP = O-phospho-L-seryl-[protein] + ADP + H(+). The catalysed reaction is L-threonyl-[protein] + ATP = O-phospho-L-threonyl-[protein] + ADP + H(+). Kinase involved in a signal transduction pathway. This is Putative mitogen-activated protein kinase 14C (p38c) from Drosophila melanogaster (Fruit fly).